Here is a 503-residue protein sequence, read N- to C-terminus: TGF-beta receptor type-1 (503 aa).

The N-terminal stretch at 1–29 is a signal peptide; that stretch reads MEVAAGAPRSRLLLFVLAATATLAPEATA. The Extracellular segment spans residues 30–126; it reads FQCFCHLCTK…PPSGLGPVEL (97 aa). Cystine bridges form between Cys32–Cys50, Cys34–Cys37, Cys44–Cys67, Cys82–Cys96, and Cys97–Cys102. Asn41 is a glycosylation site (N-linked (GlcNAc...) asparagine). The helical transmembrane segment at 127–147 threads the bilayer; the sequence is AAVIAGPVCFVCISLMLMVYI. Residues 148-503 lie on the Cytoplasmic side of the membrane; it reads CHNRTVIHHR…QLSQQEGIKM (356 aa). Position 165 is a phosphoserine (Ser165). Residues 175-204 form the GS domain; that stretch reads TTLKDLIYDMTTSGSGSGLPLLVQRTIART. 2 positions are modified to phosphothreonine; by TGFBR2: Thr185 and Thr186. A phosphoserine; by TGFBR2 mark is found at Ser187, Ser189, and Ser191. An FKBP1A-binding motif is present at residues 193–194; that stretch reads LP. A Protein kinase domain is found at 205–495; it reads IVLQESIGKG…LRIKKTLSQL (291 aa). ATP is bound by residues 211-219 and Lys232; that span reads IGKGRFGEV. The Proton acceptor role is filled by Asp333. Lys391 participates in a covalent cross-link: Glycyl lysine isopeptide (Lys-Gly) (interchain with G-Cter in SUMO).

Belongs to the protein kinase superfamily. TKL Ser/Thr protein kinase family. TGFB receptor subfamily. Homodimer; in the endoplasmic reticulum but also at the cell membrane. Heterohexamer; TGFB1, TGFB2 and TGFB3 homodimeric ligands assemble a functional receptor composed of two TGFBR1 and TGFBR2 heterodimers to form a ligand-receptor heterohexamer. The respective affinity of TGBRB1 and TGFBR2 for the ligands may modulate the kinetics of assembly of the receptor and may explain the different biological activities of TGFB1, TGFB2 and TGFB3. Component of a complex composed of TSC22D1 (via N-terminus), TGFBR1 and TGFBR2; the interaction between TSC22D1 and TGFBR1 is inhibited by SMAD7 and promoted by TGFB1. Interacts with CD109; inhibits TGF-beta receptor activation in keratinocytes. Interacts with RBPMS. Interacts (unphosphorylated) with FKBP1A; prevents TGFBR1 phosphorylation by TGFBR2 and stabilizes it in the inactive conformation. Interacts with SMAD2, SMAD3 and ZFYVE9; ZFYVE9 recruits SMAD2 and SMAD3 to the TGF-beta receptor. Interacts with TRAF6 and MAP3K7; induces MAP3K7 activation by TRAF6. Interacts with PARD6A; involved in TGF-beta induced epithelial to mesenchymal transition. Interacts with NEDD4L. Interacts with SMAD7, SMURF1 and SMURF2; SMAD7 recruits NEDD4L, SMURF1 and SMURF2 to the TGF-beta receptor. Interacts with USP15 and VPS39. Interacts with SDCBP (via C-terminus). Interacts with CAV1 and this interaction is impaired in the presence of SDCBP. Interacts with APPL1; interaction is TGF beta dependent; mediates trafficking of the TGFBR1 from the endosomes to the nucleus via microtubules in a TRAF6-dependent manner. Interacts with GPR50; this interaction promotes the constitutive activation of SMAD signaling pathway. The cofactor is Mg(2+). Requires Mn(2+) as cofactor. In terms of processing, phosphorylated at basal levels in the absence of ligand. Activated upon phosphorylation by TGFBR2, mainly in the GS domain. Phosphorylation in the GS domain abrogates FKBP1A-binding. N-Glycosylated. Post-translationally, ubiquitinated; undergoes ubiquitination catalyzed by several E3 ubiquitin ligases including SMURF1, SMURF2 and NEDD4L2. Results in the proteasomal and/or lysosomal degradation of the receptor thereby negatively regulating its activity. Deubiquitinated by USP15, leading to stabilization of the protein and enhanced TGF-beta signal. Its ubiquitination and proteasome-mediated degradation is negatively regulated by SDCBP.

It is found in the cell membrane. The protein localises to the cell junction. The protein resides in the tight junction. Its subcellular location is the membrane raft. It localises to the cell surface. It catalyses the reaction L-threonyl-[receptor-protein] + ATP = O-phospho-L-threonyl-[receptor-protein] + ADP + H(+). It carries out the reaction L-seryl-[receptor-protein] + ATP = O-phospho-L-seryl-[receptor-protein] + ADP + H(+). With respect to regulation, kept in an inactive conformation by FKBP1A preventing receptor activation in absence of ligand. CD109 is another inhibitor of the receptor. Transmembrane serine/threonine kinase forming with the TGF-beta type II serine/threonine kinase receptor, TGFBR2, the non-promiscuous receptor for the TGF-beta cytokines TGFB1, TGFB2 and TGFB3. Transduces the TGFB1, TGFB2 and TGFB3 signal from the cell surface to the cytoplasm and is thus regulating a plethora of physiological and pathological processes including cell cycle arrest in epithelial and hematopoietic cells, control of mesenchymal cell proliferation and differentiation, wound healing, extracellular matrix production, immunosuppression and carcinogenesis. The formation of the receptor complex composed of 2 TGFBR1 and 2 TGFBR2 molecules symmetrically bound to the cytokine dimer results in the phosphorylation and the activation of TGFBR1 by the constitutively active TGFBR2. Activated TGFBR1 phosphorylates SMAD2 which dissociates from the receptor and interacts with SMAD4. The SMAD2-SMAD4 complex is subsequently translocated to the nucleus where it modulates the transcription of the TGF-beta-regulated genes. This constitutes the canonical SMAD-dependent TGF-beta signaling cascade. Also involved in non-canonical, SMAD-independent TGF-beta signaling pathways. For instance, TGFBR1 induces TRAF6 autoubiquitination which in turn results in MAP3K7 ubiquitination and activation to trigger apoptosis. Also regulates epithelial to mesenchymal transition through a SMAD-independent signaling pathway through PARD6A phosphorylation and activation. The polypeptide is TGF-beta receptor type-1 (TGFBR1) (Sus scrofa (Pig)).